The primary structure comprises 310 residues: p-hydroxybenzoic acid efflux pump subunit AaeA (310 aa).

Residues 12–32 (AITVILVILAFVAIFRAWVYY) form a helical membrane-spanning segment.

Belongs to the membrane fusion protein (MFP) (TC 8.A.1) family.

It is found in the cell inner membrane. In terms of biological role, forms an efflux pump with AaeB. The sequence is that of p-hydroxybenzoic acid efflux pump subunit AaeA from Klebsiella pneumoniae (strain 342).